Reading from the N-terminus, the 335-residue chain is Erlin-2 (335 aa).

Residues 1 to 2 (MS) are Cytoplasmic-facing. The helical transmembrane segment at 3-23 (HAGAIAAIGVALIAAALFSAI) threads the bilayer. The Lumenal portion of the chain corresponds to 24–335 (HKIEEGHVGV…ALNEPAVGDE (312 aa)). Asn-106 carries N-linked (GlcNAc...) asparagine glycosylation. Residues 310–321 (AGPSVQSATLLQ) show a composition bias toward polar residues. Residues 310–335 (AGPSVQSATLLQDDSPALNEPAVGDE) are disordered.

This sequence belongs to the band 7/mec-2 family.

Its subcellular location is the endoplasmic reticulum membrane. In terms of biological role, mediates the endoplasmic reticulum-associated degradation (ERAD) of inositol 1,4,5-trisphosphate receptors (IP3Rs). Promotes sterol-accelerated ERAD of HMGCR. Involved in regulation of cellular cholesterol homeostasis by regulation the SREBP signaling pathway. This chain is Erlin-2 (erlin2), found in Xenopus tropicalis (Western clawed frog).